The primary structure comprises 229 residues: Large ribosomal subunit protein uL1 (229 aa).

In terms of assembly, part of the 50S ribosomal subunit.

In terms of biological role, binds directly to 23S rRNA. The L1 stalk is quite mobile in the ribosome, and is involved in E site tRNA release. Protein L1 is also a translational repressor protein, it controls the translation of the L11 operon by binding to its mRNA. The protein is Large ribosomal subunit protein uL1 of Rhodopseudomonas palustris (strain ATCC BAA-98 / CGA009).